The primary structure comprises 78 residues: Small ribosomal subunit protein bS20 (78 aa).

The protein belongs to the bacterial ribosomal protein bS20 family.

Its function is as follows. Binds directly to 16S ribosomal RNA. This Streptococcus pneumoniae serotype 19F (strain G54) protein is Small ribosomal subunit protein bS20.